We begin with the raw amino-acid sequence, 400 residues long: Probable succinyl-diaminopimelate desuccinylase (400 aa).

A Zn(2+)-binding site is contributed by H72. D74 is a catalytic residue. A Zn(2+)-binding site is contributed by D105. Residue E139 is the Proton acceptor of the active site. Residues E140, E165, and H378 each coordinate Zn(2+).

The protein belongs to the peptidase M20A family. Zn(2+) is required as a cofactor. It depends on Co(2+) as a cofactor.

The catalysed reaction is N-succinyl-(2S,6S)-2,6-diaminopimelate + H2O = (2S,6S)-2,6-diaminopimelate + succinate. The protein operates within amino-acid biosynthesis; L-lysine biosynthesis via DAP pathway; LL-2,6-diaminopimelate from (S)-tetrahydrodipicolinate (succinylase route): step 3/3. The protein is Probable succinyl-diaminopimelate desuccinylase (dapE) of Staphylococcus aureus (strain Mu50 / ATCC 700699).